A 687-amino-acid polypeptide reads, in one-letter code: Homeobox-leucine zipper protein HDG12 (687 aa).

A disordered region spans residues 1-32 (MEFLGDSQNHDSSETEKKNKKKKRFHRHTPHQ). Residues 8 to 17 (QNHDSSETEK) show a composition bias toward basic and acidic residues. A compositionally biased stretch (basic residues) spans 18 to 30 (KNKKKKRFHRHTP). The homeobox DNA-binding region spans 21–80 (KKKRFHRHTPHQIQRLESTFNECQHPDEKQRNQLSRELGLAPRQIKFWFQNRRTQKKAQH). Positions 87–150 (ALKEENDKIR…LERVSSIAAK (64 aa)) form a coiled coil. Positions 206 to 440 (SEMDKSLMTN…LQRMCERFTN (235 aa)) constitute an START domain.

This sequence belongs to the HD-ZIP homeobox family. Class IV subfamily. In terms of assembly, interacts with BBM. In terms of tissue distribution, expressed in apical meristems and young epidermal tissue including trichomes and stipules. Expressed in lateral root tips, the L1 layer of apical inflorescence meristems and early flower primordia, carpel and stamen filament epidermis, stigma papillae, ovule primordia, nucellus and embryo.

The protein resides in the nucleus. Its function is as follows. Probable transcription factor that acts as a negative regulator of trichome branching in association with HDG11. Seems to promote cell differentiation. May regulate cell differentiation and proliferation during root and shoot meristem development. Acts as a positive regulator of SCL18/LAS expression. Involved, together with PDF2, in the regulation of flower organs development by promoting the expression of APETALA 3 (AP3) in the epidermis and internal cell layers of developing flowers. The polypeptide is Homeobox-leucine zipper protein HDG12 (Arabidopsis thaliana (Mouse-ear cress)).